Consider the following 387-residue polypeptide: Pepsin A (387 aa).

Residues 1–15 form the signal peptide; that stretch reads MKWLLLLSLVALSEC. The propeptide at 16–61 is activation peptide; the sequence is LYKVSLIKKKSLRKNLIEHGLLKDFLKNNTLDPASKYFPQGEAATM. A Peptidase A1 domain is found at 75 to 384; sequence YFGTIGIGTP…DRANNQVGLA (310 aa). Asp93 is a catalytic residue. A disulfide bridge links Cys106 with Cys111. Residue Ser129 is modified to Phosphoserine. An intrachain disulfide couples Cys267 to Cys271. Residue Asp276 is part of the active site. Cys310 and Cys343 form a disulfide bridge.

It belongs to the peptidase A1 family.

The protein resides in the secreted. The catalysed reaction is Preferential cleavage: hydrophobic, preferably aromatic, residues in P1 and P1' positions. Cleaves 1-Phe-|-Val-2, 4-Gln-|-His-5, 13-Glu-|-Ala-14, 14-Ala-|-Leu-15, 15-Leu-|-Tyr-16, 16-Tyr-|-Leu-17, 23-Gly-|-Phe-24, 24-Phe-|-Phe-25 and 25-Phe-|-Tyr-26 bonds in the B chain of insulin.. Inhibited by pepstatin. Functionally, shows particularly broad specificity; although bonds involving phenylalanine and leucine are preferred, many others are also cleaved to some extent. The protein is Pepsin A (PGA) of Callithrix jacchus (White-tufted-ear marmoset).